The sequence spans 338 residues: D-erythrose-4-phosphate dehydrogenase (338 aa).

Position 12–13 (12–13) interacts with NAD(+); the sequence is RI. Residues 154–156, Arg200, 213–214, and Arg236 each bind substrate; these read SCT and TK. Catalysis depends on Cys155, which acts as the Nucleophile. NAD(+) is bound at residue Asn318.

It belongs to the glyceraldehyde-3-phosphate dehydrogenase family. Epd subfamily. As to quaternary structure, homotetramer.

The protein resides in the cytoplasm. It carries out the reaction D-erythrose 4-phosphate + NAD(+) + H2O = 4-phospho-D-erythronate + NADH + 2 H(+). Its pathway is cofactor biosynthesis; pyridoxine 5'-phosphate biosynthesis; pyridoxine 5'-phosphate from D-erythrose 4-phosphate: step 1/5. Functionally, catalyzes the NAD-dependent conversion of D-erythrose 4-phosphate to 4-phosphoerythronate. The sequence is that of D-erythrose-4-phosphate dehydrogenase from Tolumonas auensis (strain DSM 9187 / NBRC 110442 / TA 4).